The sequence spans 139 residues: Acidic phospholipase A2 BpPLA2-TXI (139 aa).

An N-terminal signal peptide occupies residues 1 to 16; sequence MRTLWIMAVLLVGVEG. An intrachain disulfide couples C44 to C60. Residues G45 and G47 each coordinate Ca(2+). Residue H63 is part of the active site. D64 provides a ligand contact to Ca(2+). 3 disulfide bridges follow: C65–C139, C73–C97, and C91–C102.

Belongs to the phospholipase A2 family. Group II subfamily. D49 sub-subfamily. Ca(2+) is required as a cofactor. In terms of tissue distribution, expressed by the venom gland.

The protein localises to the secreted. The enzyme catalyses a 1,2-diacyl-sn-glycero-3-phosphocholine + H2O = a 1-acyl-sn-glycero-3-phosphocholine + a fatty acid + H(+). Its function is as follows. PLA2 catalyzes the calcium-dependent hydrolysis of the 2-acyl groups in 3-sn-phosphoglycerides. This is Acidic phospholipase A2 BpPLA2-TXI from Bothrops pauloensis (Neuwied's lancehead).